The sequence spans 479 residues: Ribosomal RNA small subunit methyltransferase F (479 aa).

S-adenosyl-L-methionine contacts are provided by residues 125 to 131, glutamate 149, aspartate 176, and aspartate 194; that span reads AAAPGSK. Cysteine 247 (nucleophile) is an active-site residue.

Belongs to the class I-like SAM-binding methyltransferase superfamily. RsmB/NOP family.

The protein localises to the cytoplasm. It catalyses the reaction cytidine(1407) in 16S rRNA + S-adenosyl-L-methionine = 5-methylcytidine(1407) in 16S rRNA + S-adenosyl-L-homocysteine + H(+). In terms of biological role, specifically methylates the cytosine at position 1407 (m5C1407) of 16S rRNA. The protein is Ribosomal RNA small subunit methyltransferase F of Salmonella paratyphi A (strain ATCC 9150 / SARB42).